The sequence spans 930 residues: Endoplasmic reticulum aminopeptidase 1 (930 aa).

Residues 1–2 (MP) lie on the Cytoplasmic side of the membrane. The helical; Signal-anchor for type II membrane protein transmembrane segment at 3–23 (SLLSLVLTFLAVSSPSCCQNS) threads the bilayer. Residues 24 to 930 (DTASPKASNG…WLQKERQELL (907 aa)) are Lumenal-facing. N-linked (GlcNAc...) asparagine glycosylation is found at Asn59 and Asn143. Substrate is bound by residues Glu172 and 306–310 (GAMEN). His342 serves as a coordination point for Zn(2+). The active-site Proton acceptor is Glu343. 2 residues coordinate Zn(2+): His346 and Glu365. Cys393 and Cys432 are disulfide-bonded. Residues Asn403 and Asn655 are each glycosylated (N-linked (GlcNAc...) asparagine). Cys725 and Cys732 are disulfide-bonded. Asn749 and Asn890 each carry an N-linked (GlcNAc...) asparagine glycan.

This sequence belongs to the peptidase M1 family. As to quaternary structure, monomer. May also exist as a heterodimer; with ERAP2. Interacts with RBMX. Zn(2+) is required as a cofactor. Post-translationally, N-glycosylated. Ubiquitous.

Its subcellular location is the endoplasmic reticulum membrane. Its function is as follows. Aminopeptidase that plays a central role in peptide trimming, a step required for the generation of most HLA class I-binding peptides. Peptide trimming is essential to customize longer precursor peptides to fit them to the correct length required for presentation on MHC class I molecules. Strongly prefers substrates 9-16 residues long. Rapidly degrades 13-mer to a 9-mer and then stops. Preferentially hydrolyzes the residue Leu and peptides with a hydrophobic C-terminus, while it has weak activity toward peptides with charged C-terminus. May play a role in the inactivation of peptide hormones. May be involved in the regulation of blood pressure through the inactivation of angiotensin II and/or the generation of bradykinin in the kidney. This chain is Endoplasmic reticulum aminopeptidase 1 (Erap1), found in Rattus norvegicus (Rat).